A 90-amino-acid chain; its full sequence is Probable Fe(2+)-trafficking protein (90 aa).

It belongs to the Fe(2+)-trafficking protein family.

Its function is as follows. Could be a mediator in iron transactions between iron acquisition and iron-requiring processes, such as synthesis and/or repair of Fe-S clusters in biosynthetic enzymes. The polypeptide is Probable Fe(2+)-trafficking protein (Vibrio campbellii (strain ATCC BAA-1116)).